A 398-amino-acid polypeptide reads, in one-letter code: E3 ubiquitin-protein ligase RSL1 (398 aa).

The TRIAD supradomain stretch occupies residues 155 to 374 (QKETCNICLN…LDLTQCCGSC (220 aa)). Zn(2+)-binding residues include cysteine 159, cysteine 162, cysteine 183, cysteine 186, cysteine 246, cysteine 251, cysteine 271, cysteine 274, cysteine 279, cysteine 282, histidine 287, cysteine 292, cysteine 321, and cysteine 324. Residues 159–207 (CNICLNDDINADQMFSVDKSGHMCCSECVKRHIEVRLLEGSLITCPHYR) form an RING-type 3; degenerate zinc finger. The segment at 159–208 (CNICLNDDINADQMFSVDKSGHMCCSECVKRHIEVRLLEGSLITCPHYRC) adopts an RING-type 1 zinc-finger fold. The segment at 233–292 (TKDELIPVMDRVYCPNPRCSTLMSETELSGLNIGVRRCCVKCGEPFCVKCKVSWHNNLSC) adopts an IBR-type zinc-finger fold. Residues 321 to 349 (CSKCKHMIELSSGCISVVCRCGHTFCYQC) form an RING-type 2; atypical zinc finger. Residues 321-356 (CSKCKHMIELSSGCISVVCRCGHTFCYQCGADAGDC) form an RING-type 4; degenerate zinc finger. Residue cysteine 334 is part of the active site. Cysteine 339, cysteine 341, cysteine 346, cysteine 349, histidine 358, and cysteine 370 together coordinate Zn(2+). Residues 374–394 (CCCFVFFLVIIAIVVTIILLV) form a helical membrane-spanning segment.

The protein belongs to the RBR family. Interacts with the PYL4 and PYR1 ABA receptors at the plasma membrane. Zn(2+) is required as a cofactor.

It is found in the cell membrane. It localises to the vacuole membrane. It catalyses the reaction [E2 ubiquitin-conjugating enzyme]-S-ubiquitinyl-L-cysteine + [acceptor protein]-L-lysine = [E2 ubiquitin-conjugating enzyme]-L-cysteine + [acceptor protein]-N(6)-ubiquitinyl-L-lysine.. The protein operates within protein modification; protein ubiquitination. Functionally, acts as an E3 ubiquitin-protein ligase, or as part of E3 complex, which accepts ubiquitin from specific E2 ubiquitin-conjugating enzymes and then transfers it to substrates. Negative regulator of the abscisic acid (ABA) signaling pathway which targets PYL4 and PYR1 ABA receptors in plasma membrane to promote their FREE1/FYVE1-dependent trafficking and degradation upon ubiquitynation; this process involves clathrin-mediated endocytosis and trafficking through the ESCRT pathway. Involved in the maintenance of seed longevity. May enhance gibberellins responses. This is E3 ubiquitin-protein ligase RSL1 from Arabidopsis thaliana (Mouse-ear cress).